The sequence spans 310 residues: Protease HtpX homolog (310 aa).

The next 2 helical transmembrane spans lie at 16–36 (NAVL…VDAI) and 55–75 (IFPT…LVCI). H166 is a Zn(2+) binding site. Residue E167 is part of the active site. H170 is a binding site for Zn(2+). Helical transmembrane passes span 182–202 (VGIL…FFMG) and 214–234 (MILW…QMYL). E239 is a Zn(2+) binding site.

This sequence belongs to the peptidase M48B family. Zn(2+) is required as a cofactor.

The protein localises to the cell inner membrane. This chain is Protease HtpX homolog, found in Helicobacter pylori (strain J99 / ATCC 700824) (Campylobacter pylori J99).